The primary structure comprises 874 residues: Probable inorganic carbon transporter subunit DabA (874 aa).

Zn(2+) is bound by residues Cys-398, Asp-400, His-580, and Cys-595.

This sequence belongs to the inorganic carbon transporter (TC 9.A.2) DabA family. As to quaternary structure, forms a complex with DabB. Zn(2+) serves as cofactor.

The protein resides in the cell membrane. In terms of biological role, part of an energy-coupled inorganic carbon pump. This chain is Probable inorganic carbon transporter subunit DabA, found in Bacillus cereus (strain ZK / E33L).